Here is a 522-residue protein sequence, read N- to C-terminus: Amine oxidase [flavin-containing] (522 aa).

Over 1-492 (MTAQNTFDVI…FWERNLPSVG (492 aa)) the chain is Cytoplasmic. Residue C399 is modified to S-8alpha-FAD cysteine. The chain crosses the membrane as a helical; Anchor for type IV membrane protein span at residues 493 to 513 (GFINFLAASVLSVATAAGMLA). Over 514 to 522 (YQKGLLTRS) the chain is Mitochondrial intermembrane.

It belongs to the flavin monoamine oxidase family. The cofactor is FAD.

It localises to the mitochondrion outer membrane. It carries out the reaction a secondary aliphatic amine + O2 + H2O = a primary amine + an aldehyde + H2O2. Catalyzes the oxidative deamination of biogenic and xenobiotic amines and has important functions in the metabolism of neuroactive and vasoactive amines in the central nervous system and peripheral tissues. Oxidizes both 5-hydroxytryptamine (5-HT) and beta-phenylethylamine (PEA). This chain is Amine oxidase [flavin-containing] (mao), found in Oncorhynchus mykiss (Rainbow trout).